A 200-amino-acid chain; its full sequence is Recombination protein RecR (200 aa).

The segment at 59–74 adopts a C4-type zinc-finger fold; sequence CDICGNVCETSPCPVC. Residues 82-177 form the Toprim domain; it reads SVICVVEEPK…KVTRLASGLP (96 aa).

Belongs to the RecR family.

In terms of biological role, may play a role in DNA repair. It seems to be involved in an RecBC-independent recombinational process of DNA repair. It may act with RecF and RecO. In Bifidobacterium adolescentis (strain ATCC 15703 / DSM 20083 / NCTC 11814 / E194a), this protein is Recombination protein RecR.